The following is a 1237-amino-acid chain: Tyrosine-protein kinase sid-3 (1237 aa).

In terms of domain architecture, Protein kinase spans 107–369; that stretch reads IKLYELIGEG…REDLVAAMFL (263 aa). ATP is bound by residues 113-121 and lysine 139; that span reads IGEGSFAVV. Aspartate 230 serves as the catalytic Proton acceptor. Positions 366-426 constitute an SH3 domain; sequence AMFLDAVARE…PRSVVFAQTN (61 aa). Disordered stretches follow at residues 683–704, 741–802, 826–919, 940–986, 999–1018, and 1134–1156; these read NQGS…GIQN, PPAP…APVQ, IQPQ…EERR, SNST…SEPI, SATT…PSPP, and QQRQ…SAAS. 3 stretches are compositionally biased toward polar residues: residues 749–766, 778–791, and 847–863; these read QPVS…TLQK, KRPT…SNGF, and SAPT…SQAS. Low complexity-rich tracts occupy residues 881-910 and 940-961; these read TPIT…TSTT and SNST…PSTA. Low complexity predominate over residues 1138–1156; that stretch reads AGSSSRAVPPASASTSAAS.

The protein belongs to the protein kinase superfamily. Tyr protein kinase family. SYK/ZAP-70 subfamily. Ubiquitously present in all tissues tested. Expressed in the somatic cells of gut, pharynx, body wall muscle, neurons, skin and excretory canal cells.

It is found in the cytoplasm. The enzyme catalyses L-tyrosyl-[protein] + ATP = O-phospho-L-tyrosyl-[protein] + ADP + H(+). Tyrosine-protein kinase which plays a role in RNA-mediated gene silencing by mediating import of double-stranded RNA (dsRNA) into cells. Not required for import of ingested dsRNA into intestinal cells but involved in subsequent export from intestinal cells to internal tissues. This chain is Tyrosine-protein kinase sid-3 (sid-3), found in Caenorhabditis elegans.